The primary structure comprises 678 residues: Penicillin-binding protein activator LpoA (678 aa).

The first 26 residues, 1–26 (MVPSTFSRLKAARCLPVVLAALIFAG), serve as a signal peptide directing secretion. A lipid anchor (N-palmitoyl cysteine) is attached at Cys-27. Cys-27 is lipidated: S-diacylglycerol cysteine. Disordered stretches follow at residues 302 to 340 (DVAEQPQPQTVDGVASPAQASVSDLTGDQPAAQPVPVSA) and 496 to 528 (ALTGTPITPRATTDSGMTTNNPTLQTTPTDDQF). 2 stretches are compositionally biased toward low complexity: residues 330-340 (QPAAQPVPVSA) and 513-528 (TTNNPTLQTTPTDDQF).

This sequence belongs to the LpoA family. In terms of assembly, interacts with PBP1a.

The protein resides in the cell outer membrane. Regulator of peptidoglycan synthesis that is essential for the function of penicillin-binding protein 1A (PBP1a). This chain is Penicillin-binding protein activator LpoA, found in Shigella sonnei (strain Ss046).